We begin with the raw amino-acid sequence, 319 residues long: Beta-ketoacyl-[acyl-carrier-protein] synthase III (319 aa).

Active-site residues include Cys113 and His246. The interval 247-251 is ACP-binding; it reads QANLR. Asn276 is a catalytic residue.

The protein belongs to the thiolase-like superfamily. FabH family. As to quaternary structure, homodimer.

It localises to the cytoplasm. The catalysed reaction is malonyl-[ACP] + acetyl-CoA + H(+) = 3-oxobutanoyl-[ACP] + CO2 + CoA. It functions in the pathway lipid metabolism; fatty acid biosynthesis. Its function is as follows. Catalyzes the condensation reaction of fatty acid synthesis by the addition to an acyl acceptor of two carbons from malonyl-ACP. Catalyzes the first condensation reaction which initiates fatty acid synthesis and may therefore play a role in governing the total rate of fatty acid production. Possesses both acetoacetyl-ACP synthase and acetyl transacylase activities. Its substrate specificity determines the biosynthesis of branched-chain and/or straight-chain of fatty acids. This chain is Beta-ketoacyl-[acyl-carrier-protein] synthase III, found in Chromobacterium violaceum (strain ATCC 12472 / DSM 30191 / JCM 1249 / CCUG 213 / NBRC 12614 / NCIMB 9131 / NCTC 9757 / MK).